A 63-amino-acid polypeptide reads, in one-letter code: Large ribosomal subunit protein bL28 (63 aa).

Belongs to the bacterial ribosomal protein bL28 family.

In Clostridium beijerinckii (strain ATCC 51743 / NCIMB 8052) (Clostridium acetobutylicum), this protein is Large ribosomal subunit protein bL28.